We begin with the raw amino-acid sequence, 1909 residues long: Endoribonuclease Dicer homolog 1 (1909 aa).

Positions 99–177 are disordered; it reads TVKENGLQKN…NNKKKRECNN (79 aa). Positions 110-124 are enriched in basic and acidic residues; the sequence is GKRDEFSKEEGDKDR. Residues 131-146 are compositionally biased toward polar residues; it reads SYQSERSNLSGRGHVN. Basic and acidic residues predominate over residues 147 to 177; that stretch reads NSREGDRFMNRKRTRNWDEAGNNKKKRECNN. The Helicase ATP-binding domain maps to 256–433; sequence VLEQAKAKNT…QVDCAIKIRN (178 aa). 269–276 contacts ATP; sequence LETGAGKT. A DECH box motif is present at residues 378–381; it reads DECH. The Helicase C-terminal domain maps to 651 to 812; the sequence is SLIKLLLKYQ…RTDLSHLKDT (162 aa). One can recognise a Dicer dsRNA-binding fold domain in the interval 840–935; that stretch reads AVGLVHFYCS…LPDKGSGQDA (96 aa). Positions 929–952 are disordered; that stretch reads KGSGQDAEKADQDDEGEPVPGTAR. One can recognise a PAZ domain in the interval 1189 to 1318; that stretch reads EVEEDLSKGK…LPPELCVVHP (130 aa). 2 consecutive RNase III domains span residues 1342-1518 and 1559-1707; these read LAVQ…VEGG and FVGL…LDSG. Residues E1597, D1693, and E1696 each coordinate Mg(2+). DRBM domains follow at residues 1733–1796 and 1831–1906; these read HPVR…ALKE and FTRQ…LLNK. The segment at 1801-1831 is disordered; sequence ESKEKHINNGNAGEDQGENENGNKKNGHQPF.

It belongs to the helicase family. Dicer subfamily. As to quaternary structure, interacts (via N-terminus) with DDL. Interacts (via DRBM domains) with DRB1, DRB2 and DRB5. May interact with AGO1 or AGO10 through their common PAZ domains. It depends on Mg(2+) as a cofactor. Mn(2+) is required as a cofactor. In terms of tissue distribution, highly expressed in flowers and seeds and detected in leaves and stems. Found in ovule integuments, inflorescence and floral meristems, stigma of flowers until just before pollination, vasculature of the funiculus, and embryo.

It is found in the nucleus. In terms of biological role, ribonuclease (RNase) III involved in RNA-mediated post-transcriptional gene silencing (PTGS). Functions in the microRNAs (miRNAs) biogenesis pathway by cleaving primary miRNAs (pri-miRNAs) and precursor miRNAs (pre-miRNAs). Functions with DRB1/HYL1 and SERRATE proteins for accurate pri-miRNAs to miRNAs processing. Indirectly involved in the production of trans-acting small interfering RNAs (ta-siRNAs) derived from the TAS1, TAS2 or TAS3 endogenous transcripts by participating in the production of their initiating miRNAs. Involved in the processing of natural siRNAs (nat-siRNAs, derived from cis-natural antisense transcripts) by cleaving 24 nucleotide nat-siRNAs into 21 nucleotide nat-siRNAs. Can produce RDR6-dependent endogenous ta-siRNAs derived from TAS1 and TAS2. Required for the production of 30-40 nucleotide bacterial-induced long siRNAs (lsiRNA). Acts redundantly with DICER-LIKE 3 (DCL3) to promote flowering via repression of FLOWERING LOCUS C (FLC). Represses antiviral RNA silencing through negative regulation of the expression of DCL4 and DCL3. The chain is Endoribonuclease Dicer homolog 1 (DCL1) from Arabidopsis thaliana (Mouse-ear cress).